Reading from the N-terminus, the 173-residue chain is Lipid A deacylase PagL (173 aa).

An N-terminal signal peptide occupies residues 1 to 23 (MKKLLPLAVLAALSSVHVASAQA). At 25–28 (DVSA) the chain is on the periplasmic side. Residues 29–32 (AVGA) form a beta stranded membrane-spanning segment. Position 33 (T33) is a topological domain, periplasmic. A beta stranded transmembrane segment spans residues 34–49 (GQSGMTYRLGLSWDWD). Residues 50 to 56 (KSWWQTS) are Extracellular-facing. Residues 57–71 (TGRLTGYWDAGYTYW) traverse the membrane as a beta stranded segment. Residues 72–73 (EG) lie on the Periplasmic side of the membrane. The chain crosses the membrane as a beta stranded span at residues 74–89 (GDEGAGKHSLSFAPVF). Position 90 (V90) is a topological domain, extracellular. Residues 91 to 93 (YEF) traverse the membrane as a beta stranded segment. Residues 94–95 (AG) lie on the Periplasmic side of the membrane. Residues 96–98 (DSI) form a beta stranded membrane-spanning segment. Residues 99-100 (KP) are Extracellular-facing. A beta stranded membrane pass occupies residues 101–115 (FIEAGIGVAAFSGTR). At 116–117 (VG) the chain is on the periplasmic side. A beta stranded transmembrane segment spans residues 118–128 (DQNLGSSLNFE). Over 129-138 (DRIGAGLKFA) the chain is Extracellular. A beta stranded transmembrane segment spans residues 139 to 148 (NGQSVGVRAI). Active-site charge relay system residues include H149, S151, and E163. Residues 149-173 (HYSNAGLKQPNDGIESYSLFYKIPI) are Periplasmic-facing.

It belongs to the PagL family. As to quaternary structure, homodimer.

It is found in the cell outer membrane. It carries out the reaction a 3-(acyloxy)acyl derivative of bacterial toxin + H2O = a 3-hydroxyacyl derivative of bacterial toxin + a fatty acid + H(+). Its activity is regulated as follows. Decreased activity at low temperatures (15 or 21 degrees Celsius). Its function is as follows. Has lipid A 3-O-deacylase activity. Hydrolyzes the ester bond at the 3 position of lipid A, a bioactive component of lipopolysaccharide (LPS), thereby releasing the primary fatty acyl moiety. Lacks fatty acyl chain-length specificity as removes both 3-OH C10 and 3-OH C14 fatty acids from lipid A. This chain is Lipid A deacylase PagL, found in Pseudomonas aeruginosa (strain ATCC 15692 / DSM 22644 / CIP 104116 / JCM 14847 / LMG 12228 / 1C / PRS 101 / PAO1).